Here is a 307-residue protein sequence, read N- to C-terminus: MATH domain and coiled-coil domain-containing protein At3g58380 (307 aa).

Residues 6-132 (DKKFVWVIKD…CREITIVIEV (127 aa)) enclose the MATH domain. A coiled-coil region spans residues 238-290 (KVDWLEKKLKEVKEKKKNVDNGKARLQQIEEDLQKLNQKRLDLKDILDKEKAN).

In Arabidopsis thaliana (Mouse-ear cress), this protein is MATH domain and coiled-coil domain-containing protein At3g58380.